Consider the following 424-residue polypeptide: Tyrosine--tRNA ligase 1 (424 aa).

An L-tyrosine-binding site is contributed by Tyr37. The 'HIGH' region motif lies at 42–51 (PTADSLHLGH). Residues Tyr175 and Gln179 each coordinate L-tyrosine. A 'KMSKS' region motif is present at residues 235-239 (KFGKT). Lys238 lines the ATP pocket. One can recognise an S4 RNA-binding domain in the interval 357–414 (ADLQQALVNAGLVPSRGQARTMISSNAVAINGEKQSEPEYLFTDSNRLFDRYTLLRRG).

The protein belongs to the class-I aminoacyl-tRNA synthetase family. TyrS type 1 subfamily. As to quaternary structure, homodimer.

It is found in the cytoplasm. It catalyses the reaction tRNA(Tyr) + L-tyrosine + ATP = L-tyrosyl-tRNA(Tyr) + AMP + diphosphate + H(+). Its function is as follows. Catalyzes the attachment of tyrosine to tRNA(Tyr) in a two-step reaction: tyrosine is first activated by ATP to form Tyr-AMP and then transferred to the acceptor end of tRNA(Tyr). The chain is Tyrosine--tRNA ligase 1 from Photorhabdus laumondii subsp. laumondii (strain DSM 15139 / CIP 105565 / TT01) (Photorhabdus luminescens subsp. laumondii).